Consider the following 227-residue polypeptide: Cytochrome c oxidase subunit 2 (227 aa).

The Mitochondrial intermembrane segment spans residues 1–14 (MAHPVQLGFQDAAS). A helical membrane pass occupies residues 15–45 (PIMEELLYFHDHTLMIMFLISSLVLYIISLM). Residues 46-59 (LTTKLTHTSTMDAQ) lie on the Mitochondrial matrix side of the membrane. The chain crosses the membrane as a helical span at residues 60-87 (EVETVWTILPAAILILIALPSLRILYMM). Residues 88–227 (DEITSPSLTL…HFEEWLLFTL (140 aa)) are Mitochondrial intermembrane-facing. Cu cation contacts are provided by H161, C196, E198, C200, H204, and M207. E198 is a Mg(2+) binding site.

The protein belongs to the cytochrome c oxidase subunit 2 family. In terms of assembly, component of the cytochrome c oxidase (complex IV, CIV), a multisubunit enzyme composed of 14 subunits. The complex is composed of a catalytic core of 3 subunits MT-CO1, MT-CO2 and MT-CO3, encoded in the mitochondrial DNA, and 11 supernumerary subunits COX4I, COX5A, COX5B, COX6A, COX6B, COX6C, COX7A, COX7B, COX7C, COX8 and NDUFA4, which are encoded in the nuclear genome. The complex exists as a monomer or a dimer and forms supercomplexes (SCs) in the inner mitochondrial membrane with NADH-ubiquinone oxidoreductase (complex I, CI) and ubiquinol-cytochrome c oxidoreductase (cytochrome b-c1 complex, complex III, CIII), resulting in different assemblies (supercomplex SCI(1)III(2)IV(1) and megacomplex MCI(2)III(2)IV(2)). Found in a complex with TMEM177, COA6, COX18, COX20, SCO1 and SCO2. Interacts with TMEM177 in a COX20-dependent manner. Interacts with COX20. Interacts with COX16. The cofactor is Cu cation.

Its subcellular location is the mitochondrion inner membrane. The enzyme catalyses 4 Fe(II)-[cytochrome c] + O2 + 8 H(+)(in) = 4 Fe(III)-[cytochrome c] + 2 H2O + 4 H(+)(out). Component of the cytochrome c oxidase, the last enzyme in the mitochondrial electron transport chain which drives oxidative phosphorylation. The respiratory chain contains 3 multisubunit complexes succinate dehydrogenase (complex II, CII), ubiquinol-cytochrome c oxidoreductase (cytochrome b-c1 complex, complex III, CIII) and cytochrome c oxidase (complex IV, CIV), that cooperate to transfer electrons derived from NADH and succinate to molecular oxygen, creating an electrochemical gradient over the inner membrane that drives transmembrane transport and the ATP synthase. Cytochrome c oxidase is the component of the respiratory chain that catalyzes the reduction of oxygen to water. Electrons originating from reduced cytochrome c in the intermembrane space (IMS) are transferred via the dinuclear copper A center (CU(A)) of subunit 2 and heme A of subunit 1 to the active site in subunit 1, a binuclear center (BNC) formed by heme A3 and copper B (CU(B)). The BNC reduces molecular oxygen to 2 water molecules using 4 electrons from cytochrome c in the IMS and 4 protons from the mitochondrial matrix. The protein is Cytochrome c oxidase subunit 2 (MT-CO2) of Varecia variegata (Black-and-white ruffed lemur).